We begin with the raw amino-acid sequence, 127 residues long: Protein pkiA (127 aa).

Positions 16-127 (IFAKIISGAI…GGRQMNWPPG (112 aa)) constitute an HIT domain.

In Dictyostelium discoideum (Social amoeba), this protein is Protein pkiA (pkiA).